A 449-amino-acid polypeptide reads, in one-letter code: MAAVVRRMGPVWWGLTPALDLQMHLHPPPPPEIYCSCSDDLPELNILLVGGGDGRHILKTICQASRWPHRKLKFFIIESDLELLARHMLFLSLALEHPEQMGLQEKSELFLELFGNSLIRNKTASYLQEKSELFIRYVTDPDYQQSNVPLLNLSSIKFKERDKLEDIFKFWRNADPKLFPIDKYWDEKNRQNLGRRYDSRKGAYDWDLSMKLHDRGAGVINSREYNYWREKGVAFMNREGVYDIPNKTLASQMVVPQSSGKVLARGYWGDITASPYIAFGIETEEESLLQTANGVHVKSAQDIAQHNMISLFHELAYGKIYSVPASGQAESELAKTDSDYKTNEEQTVGLITLNNVEIHFLPRFNNFFNLLYFSCSMVHFLKPEYKFIAASKATLVLELTKFMVDLQTEKLQDYVTIVAKLAQEAGFTPTETIDWKTDYIAKFERAHDS.

Belongs to the DNAAF3 family.

It localises to the cytoplasm. The protein resides in the dynein axonemal particle. In terms of biological role, required for the assembly of axonemal inner and outer dynein arms. Involved in preassembly of dyneins into complexes before their transport into cilia. The sequence is that of Dynein axonemal assembly factor 3 (dnaaf3) from Xenopus tropicalis (Western clawed frog).